The following is a 417-amino-acid chain: MTKEKIVLAYSGGLDTSVAVKWLQDKYNYDVIAVALDVGEGKDLDFVKKKALDVGAIKSYVIDAKNLFAEEYVLPALQANLLYEGKYPLISALSRPLISKILVDIAEEEGAVAVAHGCTGKGNDQVRFDVSFTALNPNLKIVAPVREWAMSREEEIEYAKSHGIPIPINLDSPYSIDQNLWGRSNECGILEDPWAEAPKDAYDLTIDPVDAPEDPEVIQITFKKGKPVSIDGKEMPLDELILQLNTIAGKHGVGRIDHVENRLVGIKSREIYEAPAATTLIAAHQELEALTLPREVAEFKPTIEQKLAQTVYYGLWYSPLTEALQSFIEKTQEHVSGTVKVKLYKGHAQVIGRESENSLYDFDLATYNKADAFDHDAALGFIKLWGLPTQVHSAVNGPQGKKSIEKVDLEVKEAVKP.

ATP is bound at residue 9–17 (AYSGGLDTS). Y87 is a binding site for L-citrulline. ATP is bound at residue G117. Positions 119, 123, and 124 each coordinate L-aspartate. N123 contributes to the L-citrulline binding site. L-citrulline-binding residues include R127, S175, S184, E260, and Y272.

The protein belongs to the argininosuccinate synthase family. Type 1 subfamily. In terms of assembly, homotetramer.

It is found in the cytoplasm. The enzyme catalyses L-citrulline + L-aspartate + ATP = 2-(N(omega)-L-arginino)succinate + AMP + diphosphate + H(+). It participates in amino-acid biosynthesis; L-arginine biosynthesis; L-arginine from L-ornithine and carbamoyl phosphate: step 2/3. The polypeptide is Argininosuccinate synthase (Oceanobacillus iheyensis (strain DSM 14371 / CIP 107618 / JCM 11309 / KCTC 3954 / HTE831)).